The primary structure comprises 706 residues: MGKEALLNLYRIEYRPKDTTFTVFKPTHEIQKEKLNKVRWRVFLQTGLPTFRREDEFWCAGKVEKDTLYLTLSNGEIVELKRVGEEEFRGFQNERECQELFRDFLTKTKVKDKFISDFYKKFRDKITVQGKNRKIALIPEVNEKVLKSEEGYFLLHLDLKFRIQPFETLQTLLERNDFNPKRIRVKPIGIDFVGRVQDVFKAKEKGEEFFRLCMERSTHKSSKKAWEELLKNRELREKAFLVVLEKGYTYPATILKPVLTYENLEDEERNEVADIVRMEPGKRLNLIRYILRRYVKALRDYGWYISPEEERAKGKLNFKDTVLDAKGKNTKVITNLRKFLELCRPFVKKDVLSVEIISVSVYKKLEWRKEEFLKELINFLKNKGIKLKIKGKSLILAQTREEAKEKLIPVINKIKDVDLVIVFLEEYPKVDPYKSFLLYDFVKRELLKKMIPSQVILNRTLKNENLKFVLLNVAEQVLAKTGNIPYKLKEIEGKVDAFVGIDISRITRDGKTVNAVAFTKIFNSKGELVRYYLTSYPAFGEKLTEKAIGDVFSLLEKLGFKKGSKIVVHRDGRLYRDEVAAFKKYGELYGYSLELLEIIKRNNPRFFSNEKFIKGYFYKLSEDSVILATYNQVYEGTHQPIKVRKVYGELPVEVLCSQILSLTLMNYSSFQPIKLPATVHYSDKITKLMLRGIEPIKKEGDIMYWL.

The interval Met1–Thr108 is N-terminal domain. The tract at residues Lys109–Pro165 is linker L1. Positions Thr168–Leu259 constitute a PAZ domain. The tract at residues Asn263–Thr334 is linker L2. The tract at residues Asn335–Lys448 is mid domain. The region spanning Leu419–Glu694 is the Piwi domain. Positions Lys449–Leu706 are PIWI domain. Residues Asp502, Glu541, and Asp571 contribute to the active site. Asp502 provides a ligand contact to Mn(2+). Residue Asp571 participates in Mn(2+) binding. A PIWI box region spans residues Phe612–Leu650. Asp683 is a catalytic residue. Residue Asp683 coordinates Mn(2+).

Belongs to the argonaute family. Long pAgo subfamily. Requires Mg(2+) as cofactor.

A DNA-guided RNA endonuclease. Uses short ssDNA sequences as guides (gDNA) to bind complementary target strands, resulting in cleavage of the target RNA. The cleavage site is 10 nucleotides downstream of the residue base paired with the 5'-end of the gDNA. Binds ssDNA better than ssRNA, binds dsDNA and DNA-RNA hybrids but does not bind dsRNA. A 2 nucleotide 3'-overhang (possibly on the guide strand) may help load nucleic acids into the complex. The chain is Protein argonaute from Aquifex aeolicus (strain VF5).